Here is a 481-residue protein sequence, read N- to C-terminus: MALRVYNTLSGTKEDFVTLEPGRVKMYVCGVTVYDHCHIGHARANVVFDMIYRYLRHAGYEVTYVRNYTDVDDKIINRANKEGVPFNVISERFIAEFDRDMAALGLDLPTYQPKATEHIAEMIQVIERLVAKGFAYAADGDVYFSVEAFDQYLKLSKRNLEEMQAGARIEVGEKKRHPMDFALWKGSKPGEPYWDSPWGQGRPGWHIECSAMSMKYLGETFDIHGGGKDLVFPHHENEIAQSEAANGKPFARYWIHNGFVNINAEKMSKSLGNFFTIKEVLESYDAEVLRFFLLSAHYRSPIDFSDQNLKEAAAGLERIYNALAGIDEAVAADGTGAGRIDEELAEKAAGLPTRFREAMDDDFNTAQALGYVFDLVRAVNRVLAEGEIDRAVLASAREAIDRVGAVLGLFTSEPGAFVERLKSRKAAALPIEAAEIERLIEERNAARKARDFRRADEIRDTLAAQGILLLDSAQGTTWKVK.

Cysteine 29 lines the Zn(2+) pocket. Residues 31 to 41 (VTVYDHCHIGH) carry the 'HIGH' region motif. Cysteine 209, histidine 234, and glutamate 238 together coordinate Zn(2+). The 'KMSKS' region motif lies at 266-270 (KMSKS). Lysine 269 is an ATP binding site.

This sequence belongs to the class-I aminoacyl-tRNA synthetase family. Monomer. It depends on Zn(2+) as a cofactor.

It localises to the cytoplasm. The catalysed reaction is tRNA(Cys) + L-cysteine + ATP = L-cysteinyl-tRNA(Cys) + AMP + diphosphate. The protein is Cysteine--tRNA ligase of Geobacter sulfurreducens (strain ATCC 51573 / DSM 12127 / PCA).